The primary structure comprises 444 residues: Glutamyl-tRNA reductase (444 aa).

Residues 49-52 (TCNR), S109, 114-116 (ETQ), and Q120 each bind substrate. Residue C50 is the Nucleophile of the active site. 189 to 194 (GAGKMG) is an NADP(+) binding site.

The protein belongs to the glutamyl-tRNA reductase family. Homodimer.

The enzyme catalyses (S)-4-amino-5-oxopentanoate + tRNA(Glu) + NADP(+) = L-glutamyl-tRNA(Glu) + NADPH + H(+). Its pathway is porphyrin-containing compound metabolism; protoporphyrin-IX biosynthesis; 5-aminolevulinate from L-glutamyl-tRNA(Glu): step 1/2. Catalyzes the NADPH-dependent reduction of glutamyl-tRNA(Glu) to glutamate 1-semialdehyde (GSA). The protein is Glutamyl-tRNA reductase of Bacillus cereus (strain AH187).